The sequence spans 340 residues: L-threonine 3-dehydrogenase (340 aa).

Residue Cys38 coordinates Zn(2+). Catalysis depends on charge relay system residues Thr40 and His43. Zn(2+)-binding residues include His63, Glu64, Cys93, Cys96, Cys99, and Cys107. Residues Ile175, Asp195, Arg200, 261 to 263, and 285 to 286 contribute to the NAD(+) site; these read LGI and IY.

Belongs to the zinc-containing alcohol dehydrogenase family. As to quaternary structure, homotetramer. Zn(2+) serves as cofactor.

The protein localises to the cytoplasm. It carries out the reaction L-threonine + NAD(+) = (2S)-2-amino-3-oxobutanoate + NADH + H(+). Its pathway is amino-acid degradation; L-threonine degradation via oxydo-reductase pathway; glycine from L-threonine: step 1/2. Catalyzes the NAD(+)-dependent oxidation of L-threonine to 2-amino-3-ketobutyrate. The protein is L-threonine 3-dehydrogenase of Xanthomonas axonopodis pv. citri (strain 306).